The sequence spans 197 residues: Peptidyl-tRNA hydrolase (197 aa).

TRNA is bound at residue Y21. The Proton acceptor role is filled by H26. Residues Y72, N74, and N120 each contribute to the tRNA site.

This sequence belongs to the PTH family. In terms of assembly, monomer.

The protein localises to the cytoplasm. The enzyme catalyses an N-acyl-L-alpha-aminoacyl-tRNA + H2O = an N-acyl-L-amino acid + a tRNA + H(+). In terms of biological role, hydrolyzes ribosome-free peptidyl-tRNAs (with 1 or more amino acids incorporated), which drop off the ribosome during protein synthesis, or as a result of ribosome stalling. Catalyzes the release of premature peptidyl moieties from peptidyl-tRNA molecules trapped in stalled 50S ribosomal subunits, and thus maintains levels of free tRNAs and 50S ribosomes. The sequence is that of Peptidyl-tRNA hydrolase from Alkalilimnicola ehrlichii (strain ATCC BAA-1101 / DSM 17681 / MLHE-1).